The following is an 829-amino-acid chain: Periplasmic nitrate reductase (829 aa).

The tat-type signal signal peptide spans 1–30 (MKMTRRAFVKANAAASAAAVAGITLPASAA). Positions 41–97 (ITWDKAPCRFCGTGCSVLVGTQNGKVVATQGDPEAPVNKGLNCIKGYFLSKIMYGQD) constitute a 4Fe-4S Mo/W bis-MGD-type domain. [4Fe-4S] cluster contacts are provided by Cys48, Cys51, Cys55, and Cys83. Mo-bis(molybdopterin guanine dinucleotide) contacts are provided by residues Lys85, Gln152, Asn177, Cys181, 214–221 (WGSNMAEM), 245–249 (STYYH), 264–266 (QSD), Met374, Gln378, Asn484, 510–511 (SD), Lys533, Asp560, and 718–727 (TGRVLEHWHT). Phe794 contacts substrate. The Mo-bis(molybdopterin guanine dinucleotide) site is built by Asn802 and Lys819.

This sequence belongs to the prokaryotic molybdopterin-containing oxidoreductase family. NasA/NapA/NarB subfamily. In terms of assembly, component of the periplasmic nitrate reductase NapAB complex composed of NapA and NapB. Requires [4Fe-4S] cluster as cofactor. The cofactor is Mo-bis(molybdopterin guanine dinucleotide). Predicted to be exported by the Tat system. The position of the signal peptide cleavage has not been experimentally proven.

The protein localises to the periplasm. The enzyme catalyses 2 Fe(II)-[cytochrome] + nitrate + 2 H(+) = 2 Fe(III)-[cytochrome] + nitrite + H2O. Catalytic subunit of the periplasmic nitrate reductase complex NapAB. Receives electrons from NapB and catalyzes the reduction of nitrate to nitrite. This Vibrio vulnificus (strain YJ016) protein is Periplasmic nitrate reductase.